Reading from the N-terminus, the 391-residue chain is tRNA (cytosine(38)-C(5))-methyltransferase (391 aa).

The SAM-dependent MTase C5-type domain occupies L4–E391. S-adenosyl-L-methionine contacts are provided by residues I13–G15, D34, I57–E58, and S76. C79 is a catalytic residue. S376 serves as a coordination point for S-adenosyl-L-methionine.

Belongs to the class I-like SAM-binding methyltransferase superfamily. C5-methyltransferase family.

The protein localises to the cytoplasm. The enzyme catalyses cytidine(38) in tRNA + S-adenosyl-L-methionine = 5-methylcytidine(38) in tRNA + S-adenosyl-L-homocysteine + H(+). In terms of biological role, specifically methylates cytosine 38 in the anticodon loop of tRNA(Asp). Has higher activity on tRNA(Asp) modified with queuosine at position 34. This Rattus norvegicus (Rat) protein is tRNA (cytosine(38)-C(5))-methyltransferase (Trdmt1).